The chain runs to 284 residues: Aliphatic sulfonates import ATP-binding protein SsuB (284 aa).

The ABC transporter domain occupies 21–242; it reads LRIAHAVKRY…HRGAPAFARL (222 aa). 53 to 60 is an ATP binding site; that stretch reads GRSGCGKS.

Belongs to the ABC transporter superfamily. Aliphatic sulfonates importer (TC 3.A.1.17.2) family. As to quaternary structure, the complex is composed of two ATP-binding proteins (SsuB), two transmembrane proteins (SsuC) and a solute-binding protein (SsuA).

The protein localises to the cell inner membrane. It catalyses the reaction ATP + H2O + aliphatic sulfonate-[sulfonate-binding protein]Side 1 = ADP + phosphate + aliphatic sulfonateSide 2 + [sulfonate-binding protein]Side 1.. Part of the ABC transporter complex SsuABC involved in aliphatic sulfonates import. Responsible for energy coupling to the transport system. The sequence is that of Aliphatic sulfonates import ATP-binding protein SsuB from Ralstonia nicotianae (strain ATCC BAA-1114 / GMI1000) (Ralstonia solanacearum).